The following is a 304-amino-acid chain: N-acetyl-D-glucosamine kinase (304 aa).

ATP-binding positions include 4-11 (GFDMGGTK) and 133-140 (GVGGGLIV). Positions 157, 177, 179, and 184 each coordinate Zn(2+).

The protein belongs to the ROK (NagC/XylR) family. NagK subfamily.

It carries out the reaction N-acetyl-D-glucosamine + ATP = N-acetyl-D-glucosamine 6-phosphate + ADP + H(+). Its pathway is cell wall biogenesis; peptidoglycan recycling. In terms of biological role, catalyzes the phosphorylation of N-acetyl-D-glucosamine (GlcNAc) derived from cell-wall degradation, yielding GlcNAc-6-P. This chain is N-acetyl-D-glucosamine kinase, found in Yersinia pseudotuberculosis serotype IB (strain PB1/+).